Reading from the N-terminus, the 213-residue chain is Probable septum site-determining protein MinC (213 aa).

Belongs to the MinC family. In terms of assembly, interacts with MinD and FtsZ.

Its function is as follows. Cell division inhibitor that blocks the formation of polar Z ring septums. Rapidly oscillates between the poles of the cell to destabilize FtsZ filaments that have formed before they mature into polar Z rings. Prevents FtsZ polymerization. This is Probable septum site-determining protein MinC from Pseudothermotoga lettingae (strain ATCC BAA-301 / DSM 14385 / NBRC 107922 / TMO) (Thermotoga lettingae).